The chain runs to 169 residues: Crossover junction endodeoxyribonuclease RuvC (169 aa).

Active-site residues include Asp-15, Glu-75, and Asp-147. The Mg(2+) site is built by Asp-15, Glu-75, and Asp-147.

Belongs to the RuvC family. As to quaternary structure, homodimer which binds Holliday junction (HJ) DNA. The HJ becomes 2-fold symmetrical on binding to RuvC with unstacked arms; it has a different conformation from HJ DNA in complex with RuvA. In the full resolvosome a probable DNA-RuvA(4)-RuvB(12)-RuvC(2) complex forms which resolves the HJ. Requires Mg(2+) as cofactor.

The protein resides in the cytoplasm. The catalysed reaction is Endonucleolytic cleavage at a junction such as a reciprocal single-stranded crossover between two homologous DNA duplexes (Holliday junction).. Functionally, the RuvA-RuvB-RuvC complex processes Holliday junction (HJ) DNA during genetic recombination and DNA repair. Endonuclease that resolves HJ intermediates. Cleaves cruciform DNA by making single-stranded nicks across the HJ at symmetrical positions within the homologous arms, yielding a 5'-phosphate and a 3'-hydroxyl group; requires a central core of homology in the junction. The consensus cleavage sequence is 5'-(A/T)TT(C/G)-3'. Cleavage occurs on the 3'-side of the TT dinucleotide at the point of strand exchange. HJ branch migration catalyzed by RuvA-RuvB allows RuvC to scan DNA until it finds its consensus sequence, where it cleaves and resolves the cruciform DNA. This chain is Crossover junction endodeoxyribonuclease RuvC, found in Caulobacter vibrioides (strain ATCC 19089 / CIP 103742 / CB 15) (Caulobacter crescentus).